The chain runs to 325 residues: GMP reductase (325 aa).

Catalysis depends on Cys-173, which acts as the Thioimidate intermediate. 202-225 contacts NADP(+); the sequence is IIADGGIRSHGDIAKSVRFGATMV.

The protein belongs to the IMPDH/GMPR family. GuaC type 2 subfamily.

It catalyses the reaction IMP + NH4(+) + NADP(+) = GMP + NADPH + 2 H(+). Functionally, catalyzes the irreversible NADPH-dependent deamination of GMP to IMP. It functions in the conversion of nucleobase, nucleoside and nucleotide derivatives of G to A nucleotides, and in maintaining the intracellular balance of A and G nucleotides. The protein is GMP reductase of Acidovorax ebreus (strain TPSY) (Diaphorobacter sp. (strain TPSY)).